We begin with the raw amino-acid sequence, 408 residues long: Multidrug resistance protein MdtG (408 aa).

Transmembrane regions (helical) follow at residues 16 to 36 (LIVAWLGCFLTGAAFSLVMPF), 58 to 78 (IVFSITFLFSAIASPFWGGLA), 92 to 112 (LGMGIVMVLMGLAQNIWQFLI), 115 to 135 (ALLGLLGGFVPNANALIATQV), 146 to 166 (TLSTGGVSGALLGPMAGGLLA), 173 to 193 (PVFFITASVLILCFFVTLFCI), 224 to 244 (LFVTTLIIQVATGSIAPILTL), 256 to 276 (VAFISGMIASVPGVAALLSAP), 290 to 310 (ILITALIFSVLLLIPMSYVQT), 319 to 339 (FLLGAADGALLPAVQTLLVYN), and 378 to 398 (AVFLVTAGVVLFNAVYSWNSL).

It belongs to the major facilitator superfamily. DHA1 family. MdtG (TC 2.A.1.2.20) subfamily.

It localises to the cell inner membrane. Its function is as follows. Confers resistance to fosfomycin and deoxycholate. The protein is Multidrug resistance protein MdtG of Escherichia coli O81 (strain ED1a).